The primary structure comprises 910 residues: Protein translocase subunit SecA 1 (910 aa).

Residues glutamine 86, glycine 104–threonine 108, and aspartate 512 contribute to the ATP site. Residues cysteine 894, cysteine 896, cysteine 905, and histidine 906 each contribute to the Zn(2+) site.

Belongs to the SecA family. As to quaternary structure, monomer and homodimer. Part of the essential Sec protein translocation apparatus which comprises SecA, SecYEG and auxiliary proteins SecDF-YajC and YidC. It depends on Zn(2+) as a cofactor.

The protein resides in the cell inner membrane. The protein localises to the cytoplasm. It catalyses the reaction ATP + H2O + cellular proteinSide 1 = ADP + phosphate + cellular proteinSide 2.. In terms of biological role, part of the Sec protein translocase complex. Interacts with the SecYEG preprotein conducting channel. Has a central role in coupling the hydrolysis of ATP to the transfer of proteins into and across the cell membrane, serving both as a receptor for the preprotein-SecB complex and as an ATP-driven molecular motor driving the stepwise translocation of polypeptide chains across the membrane. The chain is Protein translocase subunit SecA 1 from Bordetella avium (strain 197N).